The sequence spans 184 residues: Ribosome-recycling factor (184 aa).

This sequence belongs to the RRF family.

The protein resides in the cytoplasm. Its function is as follows. Responsible for the release of ribosomes from messenger RNA at the termination of protein biosynthesis. May increase the efficiency of translation by recycling ribosomes from one round of translation to another. This is Ribosome-recycling factor from Natranaerobius thermophilus (strain ATCC BAA-1301 / DSM 18059 / JW/NM-WN-LF).